The primary structure comprises 673 residues: UvrABC system protein B (673 aa).

One can recognise a Helicase ATP-binding domain in the interval 26 to 414; it reads EGLEDGLAHQ…GDEVVDQVVR (389 aa). 39-46 provides a ligand contact to ATP; the sequence is GVTGSGKT. A Beta-hairpin motif is present at residues 92 to 115; it reads YYDYYQPEAYVPSSDTFIEKDASI. One can recognise a Helicase C-terminal domain in the interval 431–597; that stretch reads QVDDLLSEIR…GLNKKVVDIL (167 aa). The UVR domain maps to 633–668; the sequence is QQKIHELEGQMMQHAQNLEFEEAAQIRDQLHQLREL.

The protein belongs to the UvrB family. As to quaternary structure, forms a heterotetramer with UvrA during the search for lesions. Interacts with UvrC in an incision complex.

Its subcellular location is the cytoplasm. Functionally, the UvrABC repair system catalyzes the recognition and processing of DNA lesions. A damage recognition complex composed of 2 UvrA and 2 UvrB subunits scans DNA for abnormalities. Upon binding of the UvrA(2)B(2) complex to a putative damaged site, the DNA wraps around one UvrB monomer. DNA wrap is dependent on ATP binding by UvrB and probably causes local melting of the DNA helix, facilitating insertion of UvrB beta-hairpin between the DNA strands. Then UvrB probes one DNA strand for the presence of a lesion. If a lesion is found the UvrA subunits dissociate and the UvrB-DNA preincision complex is formed. This complex is subsequently bound by UvrC and the second UvrB is released. If no lesion is found, the DNA wraps around the other UvrB subunit that will check the other stand for damage. The chain is UvrABC system protein B from Salmonella paratyphi A (strain ATCC 9150 / SARB42).